The following is a 479-amino-acid chain: GTPase Obg (479 aa).

The Obg domain maps to 2–159 (PRFVDRVVIH…RDLTLELKSV (158 aa)). The region spanning 160-341 (ADVGLIGFPS…LIFGLWQMIS (182 aa)) is the OBG-type G domain. Residues 166–173 (GFPSAGKS), 191–195 (FTTLV), 212–215 (DVPG), 292–295 (NKID), and 322–324 (STV) each bind GTP. Ser-173 and Thr-193 together coordinate Mg(2+). Positions 359 to 437 (PVPVDDSGFT…IGGMTFDWEP (79 aa)) constitute an OCT domain. Positions 438–479 (QKPAGHPVAMSGRGTDARLESTDPVGTAERKVARHQRHKHGG) are disordered. Residues 469–479 (VARHQRHKHGG) show a composition bias toward basic residues.

This sequence belongs to the TRAFAC class OBG-HflX-like GTPase superfamily. OBG GTPase family. In terms of assembly, monomer. Requires Mg(2+) as cofactor.

The protein localises to the cytoplasm. An essential GTPase which binds GTP, GDP and possibly (p)ppGpp with moderate affinity, with high nucleotide exchange rates and a fairly low GTP hydrolysis rate. Plays a role in control of the cell cycle, stress response, ribosome biogenesis and in those bacteria that undergo differentiation, in morphogenesis control. The polypeptide is GTPase Obg (Mycobacterium leprae (strain Br4923)).